The chain runs to 151 residues: Large ribosomal subunit protein bL17 (151 aa).

Residues 118-151 (EAKQPPRKEKAKKPAPVQAEEASATPASEEKAQD) form a disordered region. Over residues 131–144 (PAPVQAEEASATPA) the composition is skewed to low complexity.

It belongs to the bacterial ribosomal protein bL17 family. As to quaternary structure, part of the 50S ribosomal subunit. Contacts protein L32.

This Syntrophobacter fumaroxidans (strain DSM 10017 / MPOB) protein is Large ribosomal subunit protein bL17.